A 675-amino-acid polypeptide reads, in one-letter code: Methionine--tRNA ligase (675 aa).

The 'HIGH' region motif lies at Pro15–His25. Zn(2+) is bound by residues Cys146, Cys149, Cys159, and Cys162. The short motif at Lys332–Ser336 is the 'KMSKS' region element. An ATP-binding site is contributed by Lys335. Positions Asp574 to Lys675 constitute a tRNA-binding domain.

This sequence belongs to the class-I aminoacyl-tRNA synthetase family. MetG type 1 subfamily. As to quaternary structure, homodimer. Zn(2+) is required as a cofactor.

It is found in the cytoplasm. The catalysed reaction is tRNA(Met) + L-methionine + ATP = L-methionyl-tRNA(Met) + AMP + diphosphate. Functionally, is required not only for elongation of protein synthesis but also for the initiation of all mRNA translation through initiator tRNA(fMet) aminoacylation. The polypeptide is Methionine--tRNA ligase (Shewanella amazonensis (strain ATCC BAA-1098 / SB2B)).